A 1134-amino-acid polypeptide reads, in one-letter code: DENN domain-containing protein 2B (1134 aa).

Over residues Met1–His13 the composition is skewed to polar residues. A disordered region spans residues Met1–Ile90. A phosphoserine mark is found at Ser30 and Ser32. Residues Ser32 to Pro43 are compositionally biased toward pro residues. Position 228 is a phosphothreonine (Thr228). Phosphoserine is present on Ser230. Disordered regions lie at residues Ser233–Lys273 and Leu289–Ser571. Over residues Ser249 to Arg259 the composition is skewed to basic and acidic residues. Positions Gly315–Pro348 are enriched in low complexity. Residue Thr361 is modified to Phosphothreonine. Ser365 is modified (phosphoserine). A compositionally biased stretch (pro residues) spans Leu370–Pro385. Positions Arg389–Pro399 are enriched in basic and acidic residues. Positions Gly406–Thr428 are enriched in pro residues. Residues Arg429 to Asn443 show a composition bias toward basic residues. Residues Ser453 to Ser478 are compositionally biased toward polar residues. Residue Thr479 is modified to Phosphothreonine. Composition is skewed to polar residues over residues Lys511 to Asp521 and Ser542 to Trp555. Residue Ser542 is modified to Phosphoserine. Residues Lys559 to His570 are compositionally biased toward basic residues. Phosphoserine is present on residues Ser571 and Ser619. The disordered stretch occupies residues Leu633–Phe658. Residues Glu695–Lys843 form the uDENN domain. The cDENN domain maps to Arg865–Glu998. One can recognise a dDENN domain in the interval Lys1000–Ala1093.

As to quaternary structure, interacts with ITSN1 and GRB2. Isoform 1 interacts with the SH3 domain of ABL1. Post-translationally, phosphorylated. Phosphorylation decreases ITSN1 binding.

The protein localises to the cytoplasm. It localises to the cell cortex. Its subcellular location is the cell membrane. The protein resides in the recycling endosome. Its function is as follows. May be involved in cytoskeletal organization and tumorogenicity. Seems to be involved in a signaling transduction pathway leading to activation of MAPK1/ERK2. Plays a role in EGFR trafficking from recycling endosomes back to the cell membrane. Functionally, guanine nucleotide exchange factor (GEF) which may activate RAB9A and RAB9B. Promotes the exchange of GDP to GTP, converting inactive GDP-bound Rab proteins into their active GTP-bound form. In terms of biological role, may block ERK2 activation stimulated by ABL1. May alter cell morphology and cell growth. The sequence is that of DENN domain-containing protein 2B (Dennd2b) from Mus musculus (Mouse).